A 120-amino-acid chain; its full sequence is Inner membrane protein YidG (120 aa).

The Cytoplasmic segment spans residues 1 to 21 (MPDSRKARRIADPGLQPERTS). A helical membrane pass occupies residues 22-39 (LAWFRTMLGYGALMALAI). Residues 40–48 (KHNWHQAGM) are Periplasmic-facing. A helical transmembrane segment spans residues 49–68 (LFWISIGILAIVALILWHYT). The Cytoplasmic segment spans residues 69–90 (RNRNLMDVTNSDFSQFHVVRDK). The helical transmembrane segment at 91–113 (FLISLAVLSLAILFAVTHIHQLI) threads the bilayer. Residues 114–120 (VFIERVA) are Periplasmic-facing.

It localises to the cell inner membrane. The sequence is that of Inner membrane protein YidG (yidG) from Escherichia coli O157:H7.